Reading from the N-terminus, the 307-residue chain is Bifunctional protein FolD (307 aa).

NADP(+)-binding positions include 170–172 (GRS), serine 195, and isoleucine 236.

It belongs to the tetrahydrofolate dehydrogenase/cyclohydrolase family. In terms of assembly, homodimer.

It catalyses the reaction (6R)-5,10-methylene-5,6,7,8-tetrahydrofolate + NADP(+) = (6R)-5,10-methenyltetrahydrofolate + NADPH. It carries out the reaction (6R)-5,10-methenyltetrahydrofolate + H2O = (6R)-10-formyltetrahydrofolate + H(+). It functions in the pathway one-carbon metabolism; tetrahydrofolate interconversion. Its function is as follows. Catalyzes the oxidation of 5,10-methylenetetrahydrofolate to 5,10-methenyltetrahydrofolate and then the hydrolysis of 5,10-methenyltetrahydrofolate to 10-formyltetrahydrofolate. This is Bifunctional protein FolD from Sinorhizobium fredii (strain NBRC 101917 / NGR234).